The primary structure comprises 73 residues: Kappa-scoloptoxin SsmTx-I (73 aa).

A signal peptide spans 1 to 25; the sequence is MMMMFSVVSVFLMLLLLKFHDLSMG. The propeptide occupies 26–37; it reads EEISLLKKVVRR. 2 cysteine pairs are disulfide-bonded: C45–C56 and C50–C63.

The protein belongs to the scoloptoxin-04 family. Expressed by the venom gland.

The protein localises to the secreted. Its function is as follows. Exhibits highly specific blockage of Kv2.1/KCNB1 (IC(50)=41.7 nM) voltage-gated potassium channels. This blockage is not associated with a significant change in steady-state activation, suggesting that this toxin acts as a channel blocker rather than a gating-modifier. Shows potential analgesic activities in formalin-induced paw licking, thermal pain, and acetic acid-induced abdominal writhing mice models. The polypeptide is Kappa-scoloptoxin SsmTx-I (Scolopendra mutilans (Chinese red-headed centipede)).